Here is a 924-residue protein sequence, read N- to C-terminus: Protein translocase subunit SecA (924 aa).

ATP is bound by residues Gln87, Gly105–Thr109, and Asp517. Residues Val886–Glu906 form a disordered region. Zn(2+) contacts are provided by Cys908, Cys910, Cys919, and His920.

This sequence belongs to the SecA family. In terms of assembly, monomer and homodimer. Part of the essential Sec protein translocation apparatus which comprises SecA, SecYEG and auxiliary proteins SecDF-YajC and YidC. Zn(2+) is required as a cofactor.

The protein resides in the cell inner membrane. It is found in the cytoplasm. The enzyme catalyses ATP + H2O + cellular proteinSide 1 = ADP + phosphate + cellular proteinSide 2.. Its function is as follows. Part of the Sec protein translocase complex. Interacts with the SecYEG preprotein conducting channel. Has a central role in coupling the hydrolysis of ATP to the transfer of proteins into and across the cell membrane, serving both as a receptor for the preprotein-SecB complex and as an ATP-driven molecular motor driving the stepwise translocation of polypeptide chains across the membrane. This chain is Protein translocase subunit SecA, found in Azorhizobium caulinodans (strain ATCC 43989 / DSM 5975 / JCM 20966 / LMG 6465 / NBRC 14845 / NCIMB 13405 / ORS 571).